The following is a 350-amino-acid chain: Small ribosomal subunit biogenesis GTPase RsgA (350 aa).

A compositionally biased stretch (polar residues) spans 1 to 17 (MSKNKLSKGQQRRVQAN). The disordered stretch occupies residues 1–35 (MSKNKLSKGQQRRVQANHQRRLRTDRKPELDDSQL). The CP-type G domain maps to 103–273 (TSVLTRPDLY…VIDSPGVREF (171 aa)). Residues 159–162 (NKID) and 213–221 (GQSGVGKSS) each bind GTP. Zn(2+)-binding residues include Cys-297, Cys-302, His-304, and Cys-310.

Belongs to the TRAFAC class YlqF/YawG GTPase family. RsgA subfamily. As to quaternary structure, monomer. Associates with 30S ribosomal subunit, binds 16S rRNA. Zn(2+) serves as cofactor.

It is found in the cytoplasm. In terms of biological role, one of several proteins that assist in the late maturation steps of the functional core of the 30S ribosomal subunit. Helps release RbfA from mature subunits. May play a role in the assembly of ribosomal proteins into the subunit. Circularly permuted GTPase that catalyzes slow GTP hydrolysis, GTPase activity is stimulated by the 30S ribosomal subunit. The sequence is that of Small ribosomal subunit biogenesis GTPase RsgA from Yersinia pseudotuberculosis serotype O:1b (strain IP 31758).